The sequence spans 172 residues: NADH-quinone oxidoreductase subunit B (172 aa).

Positions 46, 47, 111, and 141 each coordinate [4Fe-4S] cluster.

Belongs to the complex I 20 kDa subunit family. NDH-1 is composed of 14 different subunits. Subunits NuoB, C, D, E, F, and G constitute the peripheral sector of the complex. Requires [4Fe-4S] cluster as cofactor.

Its subcellular location is the cell membrane. It carries out the reaction a quinone + NADH + 5 H(+)(in) = a quinol + NAD(+) + 4 H(+)(out). NDH-1 shuttles electrons from NADH, via FMN and iron-sulfur (Fe-S) centers, to quinones in the respiratory chain. The immediate electron acceptor for the enzyme in this species is believed to be a menaquinone. Couples the redox reaction to proton translocation (for every two electrons transferred, four hydrogen ions are translocated across the cytoplasmic membrane), and thus conserves the redox energy in a proton gradient. The sequence is that of NADH-quinone oxidoreductase subunit B from Bacillus cytotoxicus (strain DSM 22905 / CIP 110041 / 391-98 / NVH 391-98).